Here is a 222-residue protein sequence, read N- to C-terminus: Homing endonuclease I-ApeI (222 aa).

Probably functions as a monomer. Requires Mg(2+) as cofactor. Mn(2+) is required as a cofactor.

In terms of biological role, endonuclease involved in 16S rRNA intron I-alpha homing. Recognizes the minimal target 5'-GCAAGGCTGAAACTTAAAGG-3'; generates 4 base 3' protruding ends 5'-AAAC-3' and 5'-GTTT-3'. The polypeptide is Homing endonuclease I-ApeI (apeI) (Aeropyrum pernix (strain ATCC 700893 / DSM 11879 / JCM 9820 / NBRC 100138 / K1)).